Reading from the N-terminus, the 224-residue chain is uncharacterized protein (224 aa).

To M.tuberculosis Rv2558.

This is an uncharacterized protein from Mycobacterium tuberculosis (strain CDC 1551 / Oshkosh).